Reading from the N-terminus, the 486-residue chain is Probable FAD-binding monooxygenase ltbD (486 aa).

The disordered stretch occupies residues 186–243 (PAGDGGTNDQGPSRAQSTASSGGSGRPRSTESPQSGAQASTTPTSPPTTQSTGDDPAA). Positions 194-206 (DQGPSRAQSTASS) are enriched in polar residues. Over residues 220 to 241 (SGAQASTTPTSPPTTQSTGDDP) the composition is skewed to low complexity.

This sequence belongs to the FAD-binding monooxygenase family. In terms of assembly, homodimer. FAD serves as cofactor.

In terms of biological role, probable FAD-binding monooxygenase; part of the gene cluster that mediates the biosynthesis of luteodienoside A, a glycosylated polyketide consisting of an unusual 1-O-beta-D-glucopyranosyl-myo-inositol (glucinol) ester of 3-hydroxy-2,2,4-trimethylocta-4,6-dienoic acid. The HR-PKS ltbA produces the trimethylated polyketide chain from acetyl-CoA, malonyl-CoA and S-adenosylmethionine (SAM), and the ltbA cAT domain then uses glucinol produced by the glycosyltransferase ltbB as an offloading substrate to release luteodienoside A. Since ltbA and ltbB are sufficient for the biosynthesis of luteodienoside A, the functions of the methyltransferase ltbC and the FAD-binding monooxygenase ltbD within the pathway remain obscur. This Aspergillus luteorubrus protein is Probable FAD-binding monooxygenase ltbD.